The primary structure comprises 249 residues: Segregation and condensation protein A (249 aa).

This sequence belongs to the ScpA family. Component of a cohesin-like complex composed of ScpA, ScpB and the Smc homodimer, in which ScpA and ScpB bind to the head domain of Smc. The presence of the three proteins is required for the association of the complex with DNA.

The protein localises to the cytoplasm. Participates in chromosomal partition during cell division. May act via the formation of a condensin-like complex containing Smc and ScpB that pull DNA away from mid-cell into both cell halves. This chain is Segregation and condensation protein A, found in Listeria innocua serovar 6a (strain ATCC BAA-680 / CLIP 11262).